Here is a 484-residue protein sequence, read N- to C-terminus: Zinc metalloproteinase-disintegrin jerdonitin (484 aa).

The N-terminal stretch at 1-20 (MIQVLLVTICLAVFPYQGSS) is a signal peptide. Positions 21–191 (IILESGNIDD…KLSQIMIPPE (171 aa)) are excised as a propeptide. Q192 carries the post-translational modification Pyrrolidone carboxylic acid. One can recognise a Peptidase M12B domain in the interval 194–392 (RYIELVIVAD…FTSRCLYNEP (199 aa)). Ca(2+)-binding residues include E197 and D281. Intrachain disulfides connect C305/C387, C345/C369, and C347/C352. Residue H330 participates in Zn(2+) binding. E331 is an active-site residue. The Zn(2+) site is built by H334 and H340. C387, N390, V402, N405, E409, E412, and D415 together coordinate Ca(2+). Positions 400–484 (PSVCGNYYME…AGCPRNPFHA (85 aa)) constitute a Disintegrin domain. Cystine bridges form between C403/C422, C414/C432, C416/C427, C426/C449, C440/C446, C445/C470, and C458/C477. The Cell attachment site motif lies at 462–464 (RGD).

This sequence belongs to the venom metalloproteinase (M12B) family. P-II subfamily. P-IIb sub-subfamily. As to quaternary structure, monomer. Zn(2+) serves as cofactor. The N-terminus is blocked. In terms of tissue distribution, expressed by the venom gland.

The protein resides in the secreted. With respect to regulation, fibrinogenolytic activity is completely inhibited by EDTA, but not by PMSF. Functionally, snake venom zinc metalloproteinase that inhibits ADP-induced human platelet aggregation (IC(50)=120 nM (native) and IC(50)=248 nM (recombinant)). May act by binding to the receptor GPIIb/GPIIIa (ITGA2B/ITGB3) on the platelet surface. Degrades the alpha-chain of fibrinogen completely and the beta-chain partially, leaving the gamma chain intact. Also inhibits the growth of several cell lines, including human liver cancer cells (Bel7402), human leukemia cells (K562) and human gastric carcinoma cells (BGC823). This chain is Zinc metalloproteinase-disintegrin jerdonitin, found in Protobothrops jerdonii (Jerdon's pitviper).